Reading from the N-terminus, the 859-residue chain is Sulfate permease 1 (859 aa).

Asn-51 and Asn-93 each carry an N-linked (GlcNAc...) asparagine glycan. The next 8 membrane-spanning stretches (helical) occupy residues 94 to 114 (LTAK…KWFP), 116 to 136 (YNFT…CVLV), 148 to 168 (LSPE…SLFA), 173 to 193 (VCIG…AEVL), 206 to 226 (PIIA…LGIL), 234 to 254 (LISL…IIWG), 292 to 312 (FGLI…TFGI), and 332 to 352 (FYFY…TAIS). Residues Asn-358 and Asn-391 are each glycosylated (N-linked (GlcNAc...) asparagine). A run of 4 helical transmembrane segments spans residues 395 to 415 (EIPA…KSFG), 428 to 448 (LIAI…PATG), 468 to 488 (VFTG…FFFI), and 525 to 545 (FIVT…YFAM). N-linked (GlcNAc...) asparagine glycosylation is found at Asn-630, Asn-653, and Asn-718. The region spanning 630-808 (NTTVRPPPPG…SIIAGHSSFH (179 aa)) is the STAS domain.

Belongs to the SLC26A/SulP transporter (TC 2.A.53) family.

The protein resides in the membrane. Functionally, high affinity uptake of sulfate into the cell. The sequence is that of Sulfate permease 1 (SUL1) from Saccharomyces cerevisiae (strain ATCC 204508 / S288c) (Baker's yeast).